Reading from the N-terminus, the 114-residue chain is DNA-directed RNA polymerases II, IV and V subunit 9B (114 aa).

Zn(2+) contacts are provided by cysteine 7, cysteine 10, cysteine 29, cysteine 32, cysteine 76, cysteine 79, cysteine 103, and cysteine 108. Residues 72–113 form a TFIIS-type zinc finger; that stretch reads KAVRCAKCQHGEAVFFQATARGEEGMTLFFVCCNPNCSHRWR.

Belongs to the archaeal RpoM/eukaryotic RPA12/RPB9/RPC11 RNA polymerase family. As to quaternary structure, component of the RNA polymerase II, IV and V complexes. Interacts with NRPD1.

The protein resides in the nucleus. Its subcellular location is the nucleolus. In terms of biological role, DNA-dependent RNA polymerase catalyzes the transcription of DNA into RNA using the four ribonucleoside triphosphates as substrates. Component of RNA polymerase II which synthesizes mRNA precursors and many functional non-coding RNAs. Pol II is the central component of the basal RNA polymerase II transcription machinery. It is composed of mobile elements that move relative to each other. Component of RNA polymerases IV and V which mediate short-interfering RNAs (siRNA) accumulation and subsequent RNA-directed DNA methylation-dependent (RdDM) transcriptional gene silencing (TGS) of endogenous repeated sequences, including transposable elements. Required for RNA silencing. The polypeptide is DNA-directed RNA polymerases II, IV and V subunit 9B (NRPB9B) (Arabidopsis thaliana (Mouse-ear cress)).